The chain runs to 163 residues: Epithelial membrane protein 3 (163 aa).

The helical transmembrane segment at 4-24 (LLLVVSALHILILILLFVATL) threads the bilayer. N-linked (GlcNAc...) asparagine glycans are attached at residues asparagine 47 and asparagine 56. The next 3 helical transmembrane spans lie at 66 to 86 (VQVL…LFMF), 100 to 120 (TGLC…IYAI), and 139 to 159 (FALA…YIHL).

It belongs to the PMP-22/EMP/MP20 family.

The protein resides in the membrane. Functionally, probably involved in cell proliferation and cell-cell interactions. This Homo sapiens (Human) protein is Epithelial membrane protein 3 (EMP3).